We begin with the raw amino-acid sequence, 463 residues long: ATP-dependent protease ATPase subunit HslU (463 aa).

Residues Val21, 63–68 (GVGKTE), Asp276, Glu341, and Arg413 contribute to the ATP site.

The protein belongs to the ClpX chaperone family. HslU subfamily. In terms of assembly, a double ring-shaped homohexamer of HslV is capped on each side by a ring-shaped HslU homohexamer. The assembly of the HslU/HslV complex is dependent on binding of ATP.

It localises to the cytoplasm. Functionally, ATPase subunit of a proteasome-like degradation complex; this subunit has chaperone activity. The binding of ATP and its subsequent hydrolysis by HslU are essential for unfolding of protein substrates subsequently hydrolyzed by HslV. HslU recognizes the N-terminal part of its protein substrates and unfolds these before they are guided to HslV for hydrolysis. This chain is ATP-dependent protease ATPase subunit HslU, found in Thermotoga petrophila (strain ATCC BAA-488 / DSM 13995 / JCM 10881 / RKU-1).